Reading from the N-terminus, the 448-residue chain is Probable glycine dehydrogenase (decarboxylating) subunit 1 (448 aa).

The protein belongs to the GcvP family. N-terminal subunit subfamily. As to quaternary structure, the glycine cleavage system is composed of four proteins: P, T, L and H. In this organism, the P 'protein' is a heterodimer of two subunits.

It carries out the reaction N(6)-[(R)-lipoyl]-L-lysyl-[glycine-cleavage complex H protein] + glycine + H(+) = N(6)-[(R)-S(8)-aminomethyldihydrolipoyl]-L-lysyl-[glycine-cleavage complex H protein] + CO2. In terms of biological role, the glycine cleavage system catalyzes the degradation of glycine. The P protein binds the alpha-amino group of glycine through its pyridoxal phosphate cofactor; CO(2) is released and the remaining methylamine moiety is then transferred to the lipoamide cofactor of the H protein. This Staphylococcus aureus (strain Mu3 / ATCC 700698) protein is Probable glycine dehydrogenase (decarboxylating) subunit 1.